We begin with the raw amino-acid sequence, 145 residues long: D-aminoacyl-tRNA deacylase (145 aa).

Residues 137–138 (GP) carry the Gly-cisPro motif, important for rejection of L-amino acids motif.

This sequence belongs to the DTD family. As to quaternary structure, homodimer.

It is found in the cytoplasm. The catalysed reaction is glycyl-tRNA(Ala) + H2O = tRNA(Ala) + glycine + H(+). It catalyses the reaction a D-aminoacyl-tRNA + H2O = a tRNA + a D-alpha-amino acid + H(+). Its function is as follows. An aminoacyl-tRNA editing enzyme that deacylates mischarged D-aminoacyl-tRNAs. Also deacylates mischarged glycyl-tRNA(Ala), protecting cells against glycine mischarging by AlaRS. Acts via tRNA-based rather than protein-based catalysis; rejects L-amino acids rather than detecting D-amino acids in the active site. By recycling D-aminoacyl-tRNA to D-amino acids and free tRNA molecules, this enzyme counteracts the toxicity associated with the formation of D-aminoacyl-tRNA entities in vivo and helps enforce protein L-homochirality. This is D-aminoacyl-tRNA deacylase from Rhodopirellula baltica (strain DSM 10527 / NCIMB 13988 / SH1).